The chain runs to 339 residues: Foldase protein PrsA (339 aa).

Positions Met-1–Gly-26 are cleaved as a signal peptide. Cys-27 carries N-palmitoyl cysteine lipidation. A lipid anchor (S-diacylglycerol cysteine) is attached at Cys-27. Residues Lys-197–Asp-287 enclose the PpiC domain.

Belongs to the PrsA family.

It localises to the cell membrane. It catalyses the reaction [protein]-peptidylproline (omega=180) = [protein]-peptidylproline (omega=0). In terms of biological role, plays a major role in protein secretion by helping the post-translocational extracellular folding of several secreted proteins. This chain is Foldase protein PrsA, found in Clostridium tetani (strain Massachusetts / E88).